The chain runs to 516 residues: Squalene epoxidase 5 (516 aa).

Helical transmembrane passes span 3–23 (FTNV…VFYV) and 45–65 (ATDV…YALA). FAD contacts are provided by residues 55–56 (VG), 75–76 (ER), Arg83, Phe88, Arg156, Val172, Asp335, and Met348. Residues 446 to 466 (LIYHLCAITLSSIGHLLSPFP) form a helical membrane-spanning segment.

Belongs to the squalene monooxygenase family. It depends on FAD as a cofactor. As to expression, expressed in seedlings, leaves, stems and inflorescences. Detected in siliques.

The protein resides in the membrane. The catalysed reaction is squalene + reduced [NADPH--hemoprotein reductase] + O2 = (S)-2,3-epoxysqualene + oxidized [NADPH--hemoprotein reductase] + H2O + H(+). It functions in the pathway terpene metabolism; lanosterol biosynthesis; lanosterol from farnesyl diphosphate: step 2/3. Catalyzes the stereospecific oxidation of squalene to (S)-2,3-epoxysqualene, and is considered to be a rate-limiting enzyme in steroid biosynthesis. This is Squalene epoxidase 5 (SQE5) from Arabidopsis thaliana (Mouse-ear cress).